Here is a 393-residue protein sequence, read N- to C-terminus: S-adenosylmethionine synthase (393 aa).

His-17 serves as a coordination point for ATP. A Mg(2+)-binding site is contributed by Asp-19. Glu-45 is a binding site for K(+). L-methionine-binding residues include Glu-58 and Gln-104. Residues 104 to 114 (QSAEIAQGVEE) form a flexible loop region. ATP-binding positions include 171-173 (DAK), Asp-245, 251-252 (RK), Ala-268, and Lys-272. Position 245 (Asp-245) interacts with L-methionine. Lys-276 is a binding site for L-methionine.

Belongs to the AdoMet synthase family. In terms of assembly, homotetramer; dimer of dimers. Mg(2+) is required as a cofactor. It depends on K(+) as a cofactor.

It is found in the cytoplasm. The enzyme catalyses L-methionine + ATP + H2O = S-adenosyl-L-methionine + phosphate + diphosphate. Its pathway is amino-acid biosynthesis; S-adenosyl-L-methionine biosynthesis; S-adenosyl-L-methionine from L-methionine: step 1/1. In terms of biological role, catalyzes the formation of S-adenosylmethionine (AdoMet) from methionine and ATP. The overall synthetic reaction is composed of two sequential steps, AdoMet formation and the subsequent tripolyphosphate hydrolysis which occurs prior to release of AdoMet from the enzyme. This is S-adenosylmethionine synthase from Hyphomonas neptunium (strain ATCC 15444).